The primary structure comprises 180 residues: MSNGDRLIWIDLEMTGLDPEQERIIEMASIITDSQLNIVAEGPVIAIHQPDSLLEQMDEWCTRTHGASGLTQRVKESTISEAEAEQQTLEFLGKHLEPGQSPLCGNSIGQDRRFLVKYMPKLEAFFHYRNLDVSTVKELARRWRPDVLEGVKKQGSHLALDDIRDSINELRHYRDHFFKL.

The 164-residue stretch at 7-170 (LIWIDLEMTG…DDIRDSINEL (164 aa)) folds into the Exonuclease domain. The active site involves Tyr-128.

This sequence belongs to the oligoribonuclease family.

The protein localises to the cytoplasm. In terms of biological role, 3'-to-5' exoribonuclease specific for small oligoribonucleotides. The chain is Oligoribonuclease from Marinobacter nauticus (strain ATCC 700491 / DSM 11845 / VT8) (Marinobacter aquaeolei).